Here is a 102-residue protein sequence, read N- to C-terminus: Large ribosomal subunit protein uL24 (102 aa).

Belongs to the universal ribosomal protein uL24 family. In terms of assembly, part of the 50S ribosomal subunit.

Functionally, one of two assembly initiator proteins, it binds directly to the 5'-end of the 23S rRNA, where it nucleates assembly of the 50S subunit. Its function is as follows. One of the proteins that surrounds the polypeptide exit tunnel on the outside of the subunit. This is Large ribosomal subunit protein uL24 from Finegoldia magna (strain ATCC 29328 / DSM 20472 / WAL 2508) (Peptostreptococcus magnus).